A 234-amino-acid chain; its full sequence is Fibroblast growth factor-binding protein 1 (234 aa).

An N-terminal signal peptide occupies residues 1 to 23; the sequence is MRTHGLTLLSLLLLAVPMLLVEA. Positions 25-59 are disordered; that stretch reads KEGRNRRGSKASADESLALGKPGKEPRSQPTNYPI. 3 disulfide bridges follow: Cys71-Cys88, Cys97-Cys130, and Cys106-Cys142. A glycan (N-linked (GlcNAc...) asparagine) is linked at Asn155. The tract at residues 169–200 is disordered; that stretch reads MEPSPMDTVEVTTSSSPEKTQTMATKDPQCEE. A glycan (O-linked (GalNAc...) serine) is linked at Ser172. Residues 178–192 show a composition bias toward polar residues; sequence EVTTSSSPEKTQTMA. The sufficient for interaction with FGF2 and FGF2-induced effects stretch occupies residues 194–234; it reads KDPQCEEEDLKNQRKAALEYCGETWGSLCNFFLSMVQGSSC. Intrachain disulfides connect Cys198-Cys234 and Cys214-Cys222.

Belongs to the fibroblast growth factor-binding protein family. In terms of assembly, found in a complex with FGFBP1, FGF1 and FGF2. Interacts with FGF1, FGF7, FGF10, FGF22 and HSPG2. Interacts with FGF2.

It is found in the secreted. The protein resides in the extracellular space. Its subcellular location is the cell membrane. Its function is as follows. Acts as a carrier protein that release fibroblast-binding factors (FGFs) from the extracellular matrix (EM) storage and thus enhance the mitogenic activity of FGFs. Enhances FGF2 signaling during tissue repair, angiogenesis and in tumor growth. The polypeptide is Fibroblast growth factor-binding protein 1 (FGFBP1) (Bos taurus (Bovine)).